The chain runs to 143 residues: Transcriptional regulator MraZ (143 aa).

SpoVT-AbrB domains follow at residues 5–47 and 76–119; these read EYQH…SLEE and AAEV…DKSK.

Belongs to the MraZ family. Forms oligomers.

It localises to the cytoplasm. It is found in the nucleoid. In Acetivibrio thermocellus (strain ATCC 27405 / DSM 1237 / JCM 9322 / NBRC 103400 / NCIMB 10682 / NRRL B-4536 / VPI 7372) (Clostridium thermocellum), this protein is Transcriptional regulator MraZ.